Reading from the N-terminus, the 368-residue chain is MHVVRLSIHRLRRFQTVELHPSSALNLLTGDNGAGKTSVLEALHLMAYGRSFRGRVRDGLIQQGANDLEVFVEWKEGGGAAVERTRRAGLRHSGQEWTGRLDGEDVAQLGSLCAALAVVTFEPGSHVLISGGGEPRRRFLDWGLFHVEPDFLTLWRRYARALKQRNALLKQGAQPRMLDAWDNELAESGETLTSRRMRYLERLQDRLVPVADAIAPALGLSALTFAPGWKRHEVSLADALLLARERDRQNGYTSQGPHRADWMPSFHALPGKDALSRGQAKLTALACLLAQAEDFAFERGEWPVIALDDLGSELDRHHQGRVLQRLASAPAQVLITATETPPGLADAAALLQQFHVEHGQIARQATVN.

Position 30 to 37 (Gly30 to Thr37) interacts with ATP.

It belongs to the RecF family.

The protein localises to the cytoplasm. The RecF protein is involved in DNA metabolism; it is required for DNA replication and normal SOS inducibility. RecF binds preferentially to single-stranded, linear DNA. It also seems to bind ATP. The chain is DNA replication and repair protein RecF from Xanthomonas axonopodis pv. citri (strain 306).